Consider the following 181-residue polypeptide: Ribonuclease HII (181 aa).

The RNase H type-2 domain maps to 1-181 (MICGIDEVGR…NLHRRSFKFI (181 aa)). The a divalent metal cation site is built by Asp-6, Glu-7, and Asp-98.

This sequence belongs to the RNase HII family. The cofactor is Mn(2+). Mg(2+) is required as a cofactor.

It is found in the cytoplasm. The catalysed reaction is Endonucleolytic cleavage to 5'-phosphomonoester.. Functionally, endonuclease that specifically degrades the RNA of RNA-DNA hybrids. This is Ribonuclease HII from Borrelia hermsii (strain HS1 / DAH).